The sequence spans 132 residues: Protein NrdI (132 aa).

This sequence belongs to the NrdI family.

Functionally, probably involved in ribonucleotide reductase function. In Bartonella henselae (strain ATCC 49882 / DSM 28221 / CCUG 30454 / Houston 1) (Rochalimaea henselae), this protein is Protein NrdI.